The chain runs to 279 residues: Fatty acid metabolism regulator protein (279 aa).

The region spanning 6–74 (KSPAGFAEKY…HGKPTKVNQF (69 aa)) is the HTH gntR-type domain. The H-T-H motif DNA-binding region spans 34–53 (ERELSELIGVTRTTLREVLQ).

As to quaternary structure, homodimer.

It localises to the cytoplasm. Functionally, multifunctional regulator of fatty acid metabolism. The sequence is that of Fatty acid metabolism regulator protein from Vibrio parahaemolyticus serotype O3:K6 (strain RIMD 2210633).